The sequence spans 136 residues: Non-structural protein 1 (136 aa).

The protein belongs to the pneumovirus non-structural protein 1 family. Monomer. Homomultimer. Heteromultimer with NS2. Interacts with the matrix protein M. Interacts with host ELOC and CUL2; this interaction allows NS1 to form an active E3 ligase with ELOC and CUL2. Interacts with host IRF3; this interaction leads to the disrupted association of IRF3 with CREBBP and thus reduced binding of IRF3 to the IFN-beta promoter. Interacts with host MAVS; this interaction prevents MAVS binding to RIGI and inhibits signaling pathway leading to interferon production. Interacts with host TRIM25 (via SPRY domain); this interaction suppresses RIGI ubiquitination and results in decreased interaction between RIGI and MAVS.

Its subcellular location is the host cytoplasm. The protein resides in the host mitochondrion. It localises to the host nucleus. In terms of biological role, plays a major role in antagonizing the type I IFN-mediated antiviral response by degrading or inhibiting multiple cellular factors required for either IFN induction or response pathways. Acts cooperatively with NS2 to repress activation and nuclear translocation of host IFN-regulatory factor IRF3. Also disrupts the association of IRF3 with CREBBP. Interacts with host mitochondrial-associated membrane (MAM) MAVS and prevents the interaction with RIGI. Interacts with TRIM25 to suppress TRIM25-mediated RIGI ubiquitination and thereby RIGI-MAVS interaction. Together with NS2, participates in the proteasomal degradation of host STAT2, IRF3, IRF7, TBK1 and RIGI through a NS-degradasome involving CUL2 and Elongin-C. The degradasome requires an intact mitochondrial MAVS. Decreases the levels of host TRAF3 and IKBKE/IKK-epsilon. As functions other than disruptions of the type I IFN-mediated antiviral signaling pathways, induces host SOCS1 and SOCS3 expression. Suppresses premature apoptosis by an NF-kappa-B-dependent, interferon-independent mechanism and thus facilitates virus growth. Additionally, NS1 may serve some inhibitory role in viral transcription and RNA replication. Suppresses proliferation and activation of host CD103+ CD8+ cytotoxic T-lymphocytes and Th17 helper T-lymphocytes. The sequence is that of Non-structural protein 1 (1C) from Ovis aries (Sheep).